A 138-amino-acid polypeptide reads, in one-letter code: Superoxide dismutase [Mn] (138 aa).

4 residues coordinate Mn(2+): Q1, H49, D133, and H137.

This sequence belongs to the iron/manganese superoxide dismutase family. Mn(2+) is required as a cofactor.

The catalysed reaction is 2 superoxide + 2 H(+) = H2O2 + O2. In terms of biological role, destroys superoxide anion radicals which are normally produced within the cells and which are toxic to biological systems. This chain is Superoxide dismutase [Mn] (sodA), found in Mycobacteroides chelonae (Mycobacterium chelonae).